A 175-amino-acid polypeptide reads, in one-letter code: NADH-ubiquinone oxidoreductase chain 6 (175 aa).

Transmembrane regions (helical) follow at residues 1–21 (MMTY…VSFS), 25–45 (SPIY…GIVL), 47–67 (FGGS…MLVV), 88–108 (AVLA…CYIL), and 149–169 (YGTW…LVIM).

The protein belongs to the complex I subunit 6 family. As to quaternary structure, core subunit of respiratory chain NADH dehydrogenase (Complex I) which is composed of 45 different subunits.

Its subcellular location is the mitochondrion inner membrane. The enzyme catalyses a ubiquinone + NADH + 5 H(+)(in) = a ubiquinol + NAD(+) + 4 H(+)(out). Its function is as follows. Core subunit of the mitochondrial membrane respiratory chain NADH dehydrogenase (Complex I) which catalyzes electron transfer from NADH through the respiratory chain, using ubiquinone as an electron acceptor. Essential for the catalytic activity and assembly of complex I. This is NADH-ubiquinone oxidoreductase chain 6 (MT-ND6) from Felis catus (Cat).